Reading from the N-terminus, the 105-residue chain is METLRYRFDGQRGARAGLEHALVGVVASGNLEVLVERVPLEGAMEIDILTAARGFGAIWQAVLDDFAARHPLRDVRISINDVGATPAVVSLRLEQALDVLQGADA.

At Ser-28 the chain carries O-(phosphoribosyl dephospho-coenzyme A)serine.

The protein belongs to the MdcC family. In terms of processing, covalently binds the prosthetic group of malonate decarboxylase.

Its subcellular location is the cytoplasm. Its function is as follows. Subunit of malonate decarboxylase, it is an acyl carrier protein to which acetyl and malonyl thioester residues are bound via a 2'-(5''-phosphoribosyl)-3'-dephospho-CoA prosthetic group and turn over during the catalytic mechanism. In Xanthomonas axonopodis pv. citri (strain 306), this protein is Malonate decarboxylase acyl carrier protein.